Reading from the N-terminus, the 163-residue chain is Large ribosomal subunit protein bL17 (163 aa).

Residues 127-163 (VAKKATRTRRSKKSAEAAAPAAVEAPATEEPKAESAE) are disordered. A compositionally biased stretch (basic residues) spans 129–138 (KKATRTRRSK). Over residues 142–154 (EAAAPAAVEAPAT) the composition is skewed to low complexity.

The protein belongs to the bacterial ribosomal protein bL17 family. In terms of assembly, part of the 50S ribosomal subunit. Contacts protein L32.

This Bacteroides thetaiotaomicron (strain ATCC 29148 / DSM 2079 / JCM 5827 / CCUG 10774 / NCTC 10582 / VPI-5482 / E50) protein is Large ribosomal subunit protein bL17.